The sequence spans 317 residues: L-lactate dehydrogenase (317 aa).

NAD(+)-binding positions include Val-16, Asp-37, Arg-42, Tyr-67, and Gly-81–Ala-82. Residues Gln-84 and Arg-90 each contribute to the substrate site. Residues Ser-103, Ala-120 to Asn-122, and Ser-145 contribute to the NAD(+) site. Position 122–125 (Asn-122–Asp-125) interacts with substrate. A substrate-binding site is contributed by Asp-150–Arg-153. His-177 acts as the Proton acceptor in catalysis. Position 221 is a phosphotyrosine (Tyr-221). Thr-230 is a substrate binding site.

This sequence belongs to the LDH/MDH superfamily. LDH family. Homotetramer.

The protein resides in the cytoplasm. It catalyses the reaction (S)-lactate + NAD(+) = pyruvate + NADH + H(+). It participates in fermentation; pyruvate fermentation to lactate; (S)-lactate from pyruvate: step 1/1. Catalyzes the conversion of lactate to pyruvate. The sequence is that of L-lactate dehydrogenase from Limosilactobacillus fermentum (strain NBRC 3956 / LMG 18251) (Lactobacillus fermentum).